A 599-amino-acid chain; its full sequence is PR domain zinc finger protein 5 (599 aa).

An SET domain is found at 8-124 (DRFALKSSRV…TDTELLIGYL (117 aa)). 12 consecutive C2H2-type zinc fingers follow at residues 167–190 (FACP…QSLH), 199–221 (FKCE…FEQH), 231–256 (FVCK…ENVH), 264–286 (LICS…RKIH), 289–311 (FDCQ…MITH), 317–339 (YNCE…KVIH), 345–367 (YQCK…KKTH), 373–395 (FQCD…LLIH), 401–424 (FKCH…QVVH), 430–452 (YRCE…KKTH), 458–480 (KVCP…IRSH), and 486–508 (YQCP…IRTH). The C2H2-type 13; degenerate zinc-finger motif lies at 514-536 (YQCSECSKAFSQKRGLDEHKRTH). 2 C2H2-type zinc fingers span residues 542–564 (FQCD…KMTH) and 571–594 (AECH…DNIH).

Belongs to the class V-like SAM-binding methyltransferase superfamily. As to quaternary structure, interacts with EHMT2/G9A, GFI1 and HDAC1.

The protein localises to the nucleus. Sequence-specific DNA-binding transcription factor. Represses transcription at least in part by recruitment of the histone methyltransferase EHMT2/G9A and histone deacetylases such as HDAC1. Regulates hematopoiesis-associated protein-coding and microRNA (miRNA) genes. May regulate the expression of proteins involved in extracellular matrix development and maintenance, connective tissue components and molecules regulating cell migration and adhesion. May cause G2/M arrest and apoptosis in cancer cells. In Mus musculus (Mouse), this protein is PR domain zinc finger protein 5 (Prdm5).